The chain runs to 94 residues: Pyrimidine/purine nucleoside phosphorylase (94 aa).

It belongs to the nucleoside phosphorylase PpnP family.

It carries out the reaction a purine D-ribonucleoside + phosphate = a purine nucleobase + alpha-D-ribose 1-phosphate. The enzyme catalyses adenosine + phosphate = alpha-D-ribose 1-phosphate + adenine. It catalyses the reaction cytidine + phosphate = cytosine + alpha-D-ribose 1-phosphate. The catalysed reaction is guanosine + phosphate = alpha-D-ribose 1-phosphate + guanine. It carries out the reaction inosine + phosphate = alpha-D-ribose 1-phosphate + hypoxanthine. The enzyme catalyses thymidine + phosphate = 2-deoxy-alpha-D-ribose 1-phosphate + thymine. It catalyses the reaction uridine + phosphate = alpha-D-ribose 1-phosphate + uracil. The catalysed reaction is xanthosine + phosphate = alpha-D-ribose 1-phosphate + xanthine. Its function is as follows. Catalyzes the phosphorolysis of diverse nucleosides, yielding D-ribose 1-phosphate and the respective free bases. Can use uridine, adenosine, guanosine, cytidine, thymidine, inosine and xanthosine as substrates. Also catalyzes the reverse reactions. The sequence is that of Pyrimidine/purine nucleoside phosphorylase from Shigella dysenteriae serotype 1 (strain Sd197).